The sequence spans 635 residues: Biosynthetic arginine decarboxylase (635 aa).

At Lys100 the chain carries N6-(pyridoxal phosphate)lysine. 282–292 (LDIGGGLGVDY) contributes to the substrate binding site.

It belongs to the Orn/Lys/Arg decarboxylase class-II family. SpeA subfamily. Requires Mg(2+) as cofactor. Pyridoxal 5'-phosphate serves as cofactor.

The catalysed reaction is L-arginine + H(+) = agmatine + CO2. It participates in amine and polyamine biosynthesis; agmatine biosynthesis; agmatine from L-arginine: step 1/1. Functionally, catalyzes the biosynthesis of agmatine from arginine. This chain is Biosynthetic arginine decarboxylase, found in Trichlorobacter lovleyi (strain ATCC BAA-1151 / DSM 17278 / SZ) (Geobacter lovleyi).